Here is a 1020-residue protein sequence, read N- to C-terminus: Phosphatidylinositol 3-kinase VPS34 (1020 aa).

The C2 PI3K-type domain maps to 49 to 210; that stretch reads LSTKFEDPTV…NWLDKMVLPK (162 aa). In terms of domain architecture, PIK helical spans 331-577; sequence DKELKPTPQL…DGPIKIYMDI (247 aa). The region spanning 666–1004 is the PI3K/PI4K catalytic domain; that stretch reads YPEESSVFKS…LINDSVNAFL (339 aa). Residues 672 to 678 form a G-loop region; the sequence is VFKSSLA. Residues 873–881 form a catalytic loop region; sequence GVGDRHLDN. An activation loop region spans residues 892–913; it reads HADFGYILGRDPKPFPPLMKLP.

It belongs to the PI3/PI4-kinase family. As to quaternary structure, component of the autophagy-specific VPS34 PI3-kinase complex I composed of at least VPS15, VPS30, VPS34, and of the VPS34 PI3-kinase complex II composed of VPS15, VPS30, VPS34 and VPS38. Interacts with VMNA7. Autophosphorylated.

Its subcellular location is the golgi apparatus. It is found in the trans-Golgi network membrane. The protein localises to the endosome membrane. The catalysed reaction is a 1,2-diacyl-sn-glycero-3-phospho-(1D-myo-inositol) + ATP = a 1,2-diacyl-sn-glycero-3-phospho-(1D-myo-inositol-3-phosphate) + ADP + H(+). Multifunctional phosphatidylinositol 3-kinase involved in acidification of vacuoles, pH-dependent cell growth, and autophagocytosis. Plays an important role in protein transport and virulence. Component of the autophagy-specific VPS34 PI3-kinase complex I essential to recruit the ATG8-phosphatidylinositol conjugate and the ATG12-ATG5 conjugate to the pre-autophagosomal structure. Also involved in endosome-to-Golgi retrograde transport as part of the VPS34 PI3-kinase complex II. This second complex is required for the endosome-to-Golgi retrieval of PEP1 and KEX2, and the recruitment of VPS5 and VPS7, two components of the retromer complex, to endosomal membranes (probably through the synthesis of a specific pool of phosphatidylinositol 3-phosphate recruiting the retromer to the endosomes). Finally, it might also be involved in ethanol tolerance and cell wall integrity. This is Phosphatidylinositol 3-kinase VPS34 from Candida albicans (strain SC5314 / ATCC MYA-2876) (Yeast).